Consider the following 141-residue polypeptide: Large ribosomal subunit protein uL13 (141 aa).

The protein belongs to the universal ribosomal protein uL13 family. In terms of assembly, part of the 50S ribosomal subunit.

Its function is as follows. This protein is one of the early assembly proteins of the 50S ribosomal subunit, although it is not seen to bind rRNA by itself. It is important during the early stages of 50S assembly. This Deinococcus deserti (strain DSM 17065 / CIP 109153 / LMG 22923 / VCD115) protein is Large ribosomal subunit protein uL13.